A 454-amino-acid chain; its full sequence is tRNA modification GTPase MnmE (454 aa).

(6S)-5-formyl-5,6,7,8-tetrahydrofolate-binding residues include R23, E80, and K120. The TrmE-type G domain maps to 216–377 (GMKVVIAGRP…LRNHLKQSMG (162 aa)). Position 226 (N226) interacts with K(+). GTP contacts are provided by residues 226–231 (NAGKSS), 245–251 (TDIAGTT), 270–273 (DTAG), 335–338 (NKAD), and 358–360 (SAR). Residue S230 participates in Mg(2+) binding. The K(+) site is built by T245, I247, and T250. Residue T251 coordinates Mg(2+). K454 lines the (6S)-5-formyl-5,6,7,8-tetrahydrofolate pocket.

The protein belongs to the TRAFAC class TrmE-Era-EngA-EngB-Septin-like GTPase superfamily. TrmE GTPase family. In terms of assembly, homodimer. Heterotetramer of two MnmE and two MnmG subunits. The cofactor is K(+).

The protein resides in the cytoplasm. Functionally, exhibits a very high intrinsic GTPase hydrolysis rate. Involved in the addition of a carboxymethylaminomethyl (cmnm) group at the wobble position (U34) of certain tRNAs, forming tRNA-cmnm(5)s(2)U34. The chain is tRNA modification GTPase MnmE from Escherichia coli O6:K15:H31 (strain 536 / UPEC).